Here is a 309-residue protein sequence, read N- to C-terminus: uncharacterized protein (309 aa).

The segment covering 1–11 (MPGNSRRRGAV) has biased composition (basic residues). Residues 1–69 (MPGNSRRRGA…PVKRTDETET (69 aa)) are disordered. Residues Gly261, Ile281, and Leu290 each contribute to the S-adenosyl-L-methionine site.

The protein belongs to the class IV-like SAM-binding methyltransferase superfamily. RNA methyltransferase TrmH family.

This is an uncharacterized protein from Mycobacterium leprae (strain TN).